The following is a 145-amino-acid chain: D-aminoacyl-tRNA deacylase (145 aa).

The Gly-cisPro motif, important for rejection of L-amino acids motif lies at 137 to 138 (GP).

It belongs to the DTD family. As to quaternary structure, homodimer.

It localises to the cytoplasm. It catalyses the reaction glycyl-tRNA(Ala) + H2O = tRNA(Ala) + glycine + H(+). The enzyme catalyses a D-aminoacyl-tRNA + H2O = a tRNA + a D-alpha-amino acid + H(+). Functionally, an aminoacyl-tRNA editing enzyme that deacylates mischarged D-aminoacyl-tRNAs. Also deacylates mischarged glycyl-tRNA(Ala), protecting cells against glycine mischarging by AlaRS. Acts via tRNA-based rather than protein-based catalysis; rejects L-amino acids rather than detecting D-amino acids in the active site. By recycling D-aminoacyl-tRNA to D-amino acids and free tRNA molecules, this enzyme counteracts the toxicity associated with the formation of D-aminoacyl-tRNA entities in vivo and helps enforce protein L-homochirality. This is D-aminoacyl-tRNA deacylase from Methylacidiphilum infernorum (isolate V4) (Methylokorus infernorum (strain V4)).